The primary structure comprises 850 residues: Vacuolar membrane protease (850 aa).

Over 1–20 the chain is Cytoplasmic; that stretch reads MASSRAQWFNPIAFTPWPVT. A helical transmembrane segment spans residues 21–41; sequence CITTIVYLALLIPILVINLVV. At 42–282 the chain is on the vacuolar side; the sequence is PSAPETNPKG…DGKSKDQNKV (241 aa). Residues N53, N116, and N119 are each glycosylated (N-linked (GlcNAc...) asparagine). 2 residues coordinate Zn(2+): H175 and D187. The active-site Proton acceptor is E221. E222 contacts Zn(2+). Residues 283-303 traverse the membrane as a helical segment; it reads NSGTGTLGVWFDMFGTAFAVF. Topologically, residues 304–308 are cytoplasmic; the sequence is RLHTL. The chain crosses the membrane as a helical span at residues 309–329; it reads FAISVALLVIAPLVIFVTSVI. Topologically, residues 330 to 363 are vacuolar; it reads LSKTDRMYLFSMSKSLEGTGDQVSLRGLRGFSRT. Residues 364-384 form a helical membrane-spanning segment; the sequence is PIILVIATTIPICLAYLLEKV. Residues 385–393 lie on the Cytoplasmic side of the membrane; that stretch reads NPYIVHSSQ. The chain crosses the membrane as a helical span at residues 394–414; it reads FSVWSMMFSAWIFLAWFLACA. Residues 415–425 lie on the Vacuolar side of the membrane; sequence ADFFRPSALHR. The helical transmembrane segment at 426-446 threads the bilayer; the sequence is AYSYTWIFIATWIMLVINTVY. Residues 447–529 are Cytoplasmic-facing; it reads ANQKGIAAGP…TLPRWTWVLQ (83 aa). The helical transmembrane segment at 530–550 threads the bilayer; it reads LLLLAPIVLILVGQLALFLTA. Over 551-563 the chain is Vacuolar; the sequence is SMCQVGSDGVSTF. A helical transmembrane segment spans residues 564–584; that stretch reads VVYLACSVFTTLLCIPLFPLI. Residues 585–590 lie on the Cytoplasmic side of the membrane; sequence HRFTYH. The chain crosses the membrane as a helical span at residues 591 to 611; sequence IPTFLFLVFIGTLIYNLVAFP. At 612 to 850 the chain is on the vacuolar side; sequence FSPANRLKTF…VEASHSFTIQ (239 aa). N-linked (GlcNAc...) asparagine glycosylation is found at N630, N658, and N702.

It belongs to the peptidase M28 family. Zn(2+) serves as cofactor.

Its subcellular location is the vacuole membrane. In terms of biological role, may be involved in vacuolar sorting and osmoregulation. This Ajellomyces capsulatus (strain NAm1 / WU24) (Darling's disease fungus) protein is Vacuolar membrane protease.